A 407-amino-acid chain; its full sequence is Serine/threonine transporter SstT (407 aa).

Helical transmembrane passes span 10–30 (AKGNLIIQICAGIALGILIGI), 42–62 (LGILFTSALKAIAPMLVFILI), 81–101 (IIILYIVGTFLASACAILANF), 141–161 (ALSSGNYLGILTWAIAGGAAL), 179–199 (VLKIVKFVVKLAPFGIFGLVA), 218–238 (ILLVATMLFVTFVINALIVFF), 245–267 (FPLIFICLRHSAFFAFFTRSSAA), 288–308 (ISIPLGATINMAGAAVTIAIL), and 316–336 (VGIEISLLQAFLLSIIATFAA).

Belongs to the dicarboxylate/amino acid:cation symporter (DAACS) (TC 2.A.23) family.

Its subcellular location is the cell inner membrane. It carries out the reaction L-serine(in) + Na(+)(in) = L-serine(out) + Na(+)(out). The catalysed reaction is L-threonine(in) + Na(+)(in) = L-threonine(out) + Na(+)(out). Its function is as follows. Involved in the import of serine and threonine into the cell, with the concomitant import of sodium (symport system). In Campylobacter jejuni subsp. doylei (strain ATCC BAA-1458 / RM4099 / 269.97), this protein is Serine/threonine transporter SstT.